We begin with the raw amino-acid sequence, 177 residues long: MHNNYKIAKVYAEGLFEIANTKNSLAEINEQLNSIKSVLKQMPEFYYFLVNPLISQQIKKNTIKIVFNNNLDKITLNFLLILIERRRIIYFYDIVDQFILIWNKATNTSVVEIASVISLTEKQQQYLINKLKEITKANYIKLKLKIDPSLIGGLIIKFGSNLIDLSLKGKLKNSPYI.

It belongs to the ATPase delta chain family. In terms of assembly, F-type ATPases have 2 components, F(1) - the catalytic core - and F(0) - the membrane proton channel. F(1) has five subunits: alpha(3), beta(3), gamma(1), delta(1), epsilon(1). CF(0) has four main subunits: a(1), b(1), b'(1) and c(10-14). The alpha and beta chains form an alternating ring which encloses part of the gamma chain. F(1) is attached to F(0) by a central stalk formed by the gamma and epsilon chains, while a peripheral stalk is formed by the delta, b and b' chains.

It localises to the plastid. The protein resides in the chloroplast thylakoid membrane. Functionally, f(1)F(0) ATP synthase produces ATP from ADP in the presence of a proton or sodium gradient. F-type ATPases consist of two structural domains, F(1) containing the extramembraneous catalytic core and F(0) containing the membrane proton channel, linked together by a central stalk and a peripheral stalk. During catalysis, ATP synthesis in the catalytic domain of F(1) is coupled via a rotary mechanism of the central stalk subunits to proton translocation. In terms of biological role, this protein is part of the stalk that links CF(0) to CF(1). It either transmits conformational changes from CF(0) to CF(1) or is implicated in proton conduction. In Galdieria sulphuraria (Red alga), this protein is ATP synthase subunit delta, chloroplastic.